Consider the following 582-residue polypeptide: Hemagglutinin-neuraminidase (582 aa).

The Intravirion portion of the chain corresponds to 1 to 34; it reads MEPSKLFTMSDNATFAPGPVINAADKKTFRTCFR. Residues 35-55 form a helical; Signal-anchor for type II membrane protein membrane-spanning segment; that stretch reads ILVLSVQAVTLILVIVTLGEL. At 56–582 the chain is on the virion surface side; the sequence is VRMINDQGLS…LPVLTRLTIT (527 aa). A glycan (N-linked (GlcNAc...) asparagine; by host) is linked at Asn-127. 3 cysteine pairs are disulfide-bonded: Cys-178/Cys-202, Cys-192/Cys-253, and Cys-244/Cys-257. The tract at residues 240–245 is involved in neuraminidase activity; it reads NRKSCS. N-linked (GlcNAc...) asparagine; by host glycans are attached at residues Asn-284 and Asn-329. Disulfide bonds link Cys-350-Cys-471, Cys-382-Cys-392, and Cys-465-Cys-475. 3 N-linked (GlcNAc...) asparagine; by host glycosylation sites follow: Asn-400, Asn-448, and Asn-464. The N-linked (GlcNAc...) asparagine; by host glycan is linked to Asn-507. Cys-545 and Cys-556 are joined by a disulfide.

The protein belongs to the paramyxoviruses hemagglutinin-neuraminidase family. In terms of assembly, homotetramer; composed of disulfide-linked homodimers. Interacts with F protein trimer.

It localises to the virion membrane. The protein localises to the host cell membrane. The catalysed reaction is Hydrolysis of alpha-(2-&gt;3)-, alpha-(2-&gt;6)-, alpha-(2-&gt;8)- glycosidic linkages of terminal sialic acid residues in oligosaccharides, glycoproteins, glycolipids, colominic acid and synthetic substrates.. In terms of biological role, attaches the virus to alpha-2,3-linked sialic acid-containing cell receptors and thereby initiating infection. Binding of HN protein to the receptor induces a conformational change that allows the F protein to trigger virion/cell membranes fusion. Binds to the glycan motifs sialyl Lewis (SLe) and GM2 ganglioside (GM2-glycan). Functionally, neuraminidase (sialidase) activity ensures the efficient spread of the virus by dissociating the mature virions from the neuraminic acid containing glycoproteins. The sequence is that of Hemagglutinin-neuraminidase (HN) from Mumps virus genotype B (strain Miyahara vaccine) (MuV).